Reading from the N-terminus, the 180-residue chain is DNA-directed RNA polymerase subunit omega (180 aa).

Positions 100–180 (ISKSGTPILP…NSDDSETTNS (81 aa)) are disordered. Composition is skewed to acidic residues over residues 137–151 (EVDVDAELEVGDEET) and 159–180 (AEAETEAETTEVNSDDSETTNS).

The protein belongs to the RNA polymerase subunit omega family. In terms of assembly, the RNAP catalytic core consists of 2 alpha, 1 beta, 1 beta' and 1 omega subunit. When a sigma factor is associated with the core the holoenzyme is formed, which can initiate transcription.

It catalyses the reaction RNA(n) + a ribonucleoside 5'-triphosphate = RNA(n+1) + diphosphate. Its function is as follows. Promotes RNA polymerase assembly. Latches the N- and C-terminal regions of the beta' subunit thereby facilitating its interaction with the beta and alpha subunits. This Pelagibacter ubique (strain HTCC1062) protein is DNA-directed RNA polymerase subunit omega.